The following is a 180-amino-acid chain: Sec-independent protein translocase protein TatB (180 aa).

A helical membrane pass occupies residues 1-21 (MFDIGWSELLVIGVVALIAIG). Residues 95–180 (IEGVDKPVES…AERLKDAKAS (86 aa)) form a disordered region. Low complexity predominate over residues 103 to 123 (ESQPAASAAPETSATVEAPAT). Residues 170 to 180 (EAERLKDAKAS) show a composition bias toward basic and acidic residues.

This sequence belongs to the TatB family. The Tat system comprises two distinct complexes: a TatABC complex, containing multiple copies of TatA, TatB and TatC subunits, and a separate TatA complex, containing only TatA subunits. Substrates initially bind to the TatABC complex, which probably triggers association of the separate TatA complex to form the active translocon.

Its subcellular location is the cell inner membrane. In terms of biological role, part of the twin-arginine translocation (Tat) system that transports large folded proteins containing a characteristic twin-arginine motif in their signal peptide across membranes. Together with TatC, TatB is part of a receptor directly interacting with Tat signal peptides. TatB may form an oligomeric binding site that transiently accommodates folded Tat precursor proteins before their translocation. This is Sec-independent protein translocase protein TatB from Bradyrhizobium sp. (strain BTAi1 / ATCC BAA-1182).